The following is a 150-amino-acid chain: UPF0178 protein PBPRA1738 (150 aa).

It belongs to the UPF0178 family.

This chain is UPF0178 protein PBPRA1738, found in Photobacterium profundum (strain SS9).